The following is a 147-amino-acid chain: Hemoglobin subunit beta-3 (147 aa).

Residues 3 to 147 (HWTAEEKAVI…LVDALSHSYH (145 aa)) form the Globin domain. Heme b is bound by residues histidine 64 and histidine 93.

The protein belongs to the globin family. In terms of assembly, heterotetramer of two alpha chains and two beta chains. In terms of tissue distribution, red blood cells.

Its function is as follows. This is a tadpole (larval) beta chain. This chain is Hemoglobin subunit beta-3, found in Aquarana catesbeiana (American bullfrog).